We begin with the raw amino-acid sequence, 314 residues long: Bifunctional riboflavin kinase/FMN adenylyltransferase (314 aa).

It belongs to the RibF family.

It carries out the reaction riboflavin + ATP = FMN + ADP + H(+). It catalyses the reaction FMN + ATP + H(+) = FAD + diphosphate. It participates in cofactor biosynthesis; FAD biosynthesis; FAD from FMN: step 1/1. It functions in the pathway cofactor biosynthesis; FMN biosynthesis; FMN from riboflavin (ATP route): step 1/1. Catalyzes the phosphorylation of riboflavin to FMN followed by the adenylation of FMN to FAD. Can also catalyze the phosphorylation of the toxic riboflavin analogs 8-demethyl-8-aminoriboflavin (AF) to 8-demethyl-8-aminoriboflavin mononucleotide (AFMN) and roseoflavin (RoF) to roseoflavin mononucleotide (RoFMN), and the adenylation of AFMN to 8-demethyl-8-aminoriboflavin adenine dinucleotide (AFAD). The chain is Bifunctional riboflavin kinase/FMN adenylyltransferase from Listeria monocytogenes serovar 1/2a (strain ATCC BAA-679 / EGD-e).